The following is a 1233-amino-acid chain: Insulin receptor substrate 1 (1233 aa).

Serine 3 is modified (phosphoserine). The tract at residues serine 3–serine 133 is mediates interaction with PHIP. One can recognise a PH domain in the interval aspartate 12–asparagine 115. Serine 99 carries the post-translational modification Phosphoserine; by CK2. The 105-residue stretch at phenylalanine 155–phenylalanine 259 folds into the IRS-type PTB domain. The interval aspartate 257–glutamate 425 is disordered. The span at lysine 264–serine 276 shows a compositional bias: low complexity. A phosphoserine; by RPS6KB1 mark is found at serine 265 and serine 302. Serine 307 bears the Phosphoserine; by IKKB, MAPK8 and RPS6KB1 mark. A phosphoserine mark is found at serine 318, serine 325, serine 340, and serine 343. The segment covering threonine 349–serine 358 has biased composition (basic residues). 2 stretches are compositionally biased toward low complexity: residues serine 378–serine 399 and serine 407–glycine 419. Position 414 is a phosphoserine (serine 414). Phosphothreonine is present on residues threonine 441 and threonine 448. Tyrosine 460 bears the Phosphotyrosine; by INSR mark. A YXXM motif 1 motif is present at residues tyrosine 460–methionine 463. Serine 522 is subject to Phosphoserine; by RPS6KB1. 2 short sequence motifs (YXXM motif) span residues tyrosine 546–methionine 549 and tyrosine 608–methionine 611. Tyrosine 608 is subject to Phosphotyrosine; by INSR. Phosphoserine is present on serine 612. Phosphotyrosine; by INSR is present on tyrosine 628. The short motif at tyrosine 628–methionine 631 is the YXXM motif 4 element. At serine 632 the chain carries Phosphoserine; by RPS6KB1 and ROCK2. The disordered stretch occupies residues glutamine 651–leucine 720. Phosphotyrosine is present on tyrosine 658. The YXXM motif 5 signature appears at tyrosine 658–methionine 661. Over residues serine 662 to serine 689 the composition is skewed to low complexity. Residues tyrosine 727–methionine 730 carry the YXXM motif 6 motif. Residues phenylalanine 766–threonine 985 form a disordered region. Over residues arginine 771–arginine 780 the composition is skewed to basic and acidic residues. 2 stretches are compositionally biased toward low complexity: residues arginine 785–arginine 794 and aspartate 801–serine 810. A Phosphoserine; by AMPK and SIK2 modification is found at serine 789. Serine 887 bears the Phosphoserine mark. Tyrosine 891, tyrosine 935, and tyrosine 983 each carry phosphotyrosine; by INSR. Positions tyrosine 891 to asparagine 893 are GRB2-binding. Short sequence motifs (YXXM motif) lie at residues tyrosine 935–methionine 938, tyrosine 983–methionine 986, and tyrosine 1006–methionine 1009. The interval alanine 1015 to serine 1137 is disordered. The segment covering serine 1032–proline 1042 has biased composition (low complexity). 2 stretches are compositionally biased toward polar residues: residues glutamine 1043 to histidine 1052 and threonine 1069 to alanine 1081. 2 positions are modified to phosphoserine: serine 1096 and serine 1097. Residues alanine 1116–serine 1129 are compositionally biased toward gly residues. Tyrosine 1173 carries the phosphotyrosine; by INSR modification. The interval leucine 1178–glutamine 1233 is disordered. Lysine 1180 is covalently cross-linked (Glycyl lysine isopeptide (Lys-Gly) (interchain with G-Cter in ubiquitin)). Residues glycine 1203–lysine 1227 are compositionally biased toward polar residues. At tyrosine 1220 the chain carries Phosphotyrosine; by INSR.

In terms of assembly, interacts (via phosphorylated YXXM motifs) with PIK3R1. Interacts with ROCK1. Interacts with GRB2. Interacts with SOCS7. Interacts (via IRS-type PTB domain) with IGF1R and INSR (via the tyrosine-phosphorylated NPXY motif). Interacts with UBTF and PIK3CA. Interacts (via PH domain) with PHIP. Interacts with FER. Interacts with ALK. Interacts with EIF2AK2/PKR. Interacts with GKAP1. Interacts with DGKZ in the absence of insulin; insulin stimulation decreases this interaction. Found in a ternary complex with DGKZ and PIP5K1A in the absence of insulin stimulation. Interacts with SQSTM1; the interaction is disrupted by the presence of tensin TNS2. Interacts with NCK1 (via SH2 domain). Interacts with NCK2 (via SH3 domain). Interacts with SH2B1; this interaction enhances leptin-induced activation of the PI3-kinase pathway. Interacts with DVL2; this interaction promotes the Wnt/beta-catenin signaling pathway. Post-translationally, serine phosphorylation of IRS1 is a mechanism for insulin resistance. Ser-307 phosphorylation inhibits insulin action through disruption of IRS1 interaction with the insulin receptor. Phosphorylation of Tyr-891 is required for GRB2-binding. Phosphorylated by ALK. Phosphorylated at Ser-265, Ser-302, Ser-632 and Ser-1097 by RPS6KB1; phosphorylation induces accelerated degradation of IRS1. Phosphorylated on tyrosine residues in response to insulin. In skeletal muscles, dephosphorylated on Tyr-608 by TNS2 under anabolic conditions; dephosphorylation results in the proteasomal degradation of IRS1. In terms of processing, ubiquitinated by the Cul7-RING(FBXW8) complex in a mTOR-dependent manner, leading to its degradation: the Cul7-RING(FBXW8) complex recognizes and binds IRS1 previously phosphorylated by S6 kinase (RPS6KB1 or RPS6KB2). Ubiquitinated by TRAF4 through 'Lys-29' linkage; this ubiquitination regulates the interaction of IRS1 with IGFR and IRS1 tyrosine phosphorylation upon IGF1 stimulation. S-nitrosylation at by BLVRB inhibits its activity. As to expression, expressed in osteoblasts, but not in osteoclasts.

Its subcellular location is the cytoplasm. The protein localises to the nucleus. Signaling adapter protein that participates in the signal transduction from two prominent receptor tyrosine kinases, insulin receptor/INSR and insulin-like growth factor I receptor/IGF1R. Plays therefore an important role in development, growth, glucose homeostasis as well as lipid metabolism. Upon phosphorylation by the insulin receptor, functions as a signaling scaffold that propagates insulin action through binding to SH2 domain-containing proteins including the p85 regulatory subunit of PI3K, NCK1, NCK2, GRB2 or SHP2. Recruitment of GRB2 leads to the activation of the guanine nucleotide exchange factor SOS1 which in turn triggers the Ras/Raf/MEK/MAPK signaling cascade. Activation of the PI3K/AKT pathway is responsible for most of insulin metabolic effects in the cell, and the Ras/Raf/MEK/MAPK is involved in the regulation of gene expression and in cooperation with the PI3K pathway regulates cell growth and differentiation. Acts a positive regulator of the Wnt/beta-catenin signaling pathway through suppression of DVL2 autophagy-mediated degradation leading to cell proliferation. In Mus musculus (Mouse), this protein is Insulin receptor substrate 1 (Irs1).